The sequence spans 425 residues: [Pyruvate dehydrogenase (acetyl-transferring)] kinase, mitochondrial (425 aa).

Position 178 is a phosphohistidine; by autocatalysis (histidine 178). A Histidine kinase domain is found at 180-418 (NVAVEIALDI…DVYIHLNRLC (239 aa)). ATP contacts are provided by residues 296-303 (EILKNSLR), aspartate 336, 355-356 (TT), and 379-384 (GFGFGL).

The protein belongs to the PDK/BCKDK protein kinase family.

The protein resides in the mitochondrion matrix. It carries out the reaction L-seryl-[pyruvate dehydrogenase E1 alpha subunit] + ATP = O-phospho-L-seryl-[pyruvate dehydrogenase E1 alpha subunit] + ADP + H(+). Inhibits the mitochondrial pyruvate dehydrogenase complex by phosphorylation of the E1 alpha subunit, thus contributing to the regulation of glucose metabolism. This chain is [Pyruvate dehydrogenase (acetyl-transferring)] kinase, mitochondrial (pkp1), found in Schizosaccharomyces pombe (strain 972 / ATCC 24843) (Fission yeast).